The primary structure comprises 276 residues: Radial spoke head protein 9 homolog (276 aa).

It belongs to the flagellar radial spoke RSP9 family. Component of the axonemal radial spoke 1 (RS1) and 2 (RS2) complexes, at least composed of spoke head proteins RSPH1, RSPH3, RSPH9 and the cilia-specific component RSPH4A or sperm-specific component RSPH6A, spoke stalk proteins RSPH14, DNAJB13, DYDC1, ROPN1L and NME5, and the RS1 complex-specific anchor protein IQUB. Interacts with IQUB. Interacts with RSPH3B. Interacts with RSPH4A. Interacts with RSPH6A. Interacts with CFAP61. Interacts with LRRC23.

Its subcellular location is the cytoplasm. The protein localises to the cytoskeleton. It is found in the cilium axoneme. It localises to the flagellum axoneme. The protein resides in the cell projection. Its subcellular location is the kinocilium. Functionally, functions as part of axonemal radial spoke complexes that play an important part in the motility of sperm and cilia. Essential for both the radial spoke head assembly and the central pair microtubule stability in ependymal motile cilia. Required for motility of olfactory and neural cilia and for the structural integrity of ciliary axonemes in both 9+0 and 9+2 motile cilia. The chain is Radial spoke head protein 9 homolog (RSPH9) from Homo sapiens (Human).